A 130-amino-acid chain; its full sequence is Small ribosomal subunit protein uS9 (130 aa).

This sequence belongs to the universal ribosomal protein uS9 family.

The polypeptide is Small ribosomal subunit protein uS9 (Methylococcus capsulatus (strain ATCC 33009 / NCIMB 11132 / Bath)).